Consider the following 278-residue polypeptide: NAD kinase (278 aa).

Asp-56 (proton acceptor) is an active-site residue. Residues 56-57, 132-133, Arg-158, Asp-160, and 171-176 each bind NAD(+); these read DG, NE, and TAYNKS.

Belongs to the NAD kinase family. The cofactor is a divalent metal cation.

The protein localises to the cytoplasm. It catalyses the reaction NAD(+) + ATP = ADP + NADP(+) + H(+). In terms of biological role, involved in the regulation of the intracellular balance of NAD and NADP, and is a key enzyme in the biosynthesis of NADP. Catalyzes specifically the phosphorylation on 2'-hydroxyl of the adenosine moiety of NAD to yield NADP. This is NAD kinase from Streptococcus agalactiae serotype III (strain NEM316).